A 261-amino-acid polypeptide reads, in one-letter code: Glucosamine-6-phosphate deaminase (261 aa).

Aspartate 67 serves as the catalytic Proton acceptor; for enolization step. Aspartate 136 functions as the For ring-opening step in the catalytic mechanism. The active-site Proton acceptor; for ring-opening step is histidine 138. Glutamate 143 serves as the catalytic For ring-opening step.

Belongs to the glucosamine/galactosamine-6-phosphate isomerase family. NagB subfamily.

It carries out the reaction alpha-D-glucosamine 6-phosphate + H2O = beta-D-fructose 6-phosphate + NH4(+). It participates in amino-sugar metabolism; N-acetylneuraminate degradation; D-fructose 6-phosphate from N-acetylneuraminate: step 5/5. Functionally, catalyzes the reversible isomerization-deamination of glucosamine 6-phosphate (GlcN6P) to form fructose 6-phosphate (Fru6P) and ammonium ion. This is Glucosamine-6-phosphate deaminase from Mycolicibacterium smegmatis (strain ATCC 700084 / mc(2)155) (Mycobacterium smegmatis).